The primary structure comprises 228 residues: Ribosomal RNA small subunit methyltransferase G (228 aa).

Residues G70, 121–122 (AE), and R138 contribute to the S-adenosyl-L-methionine site.

This sequence belongs to the methyltransferase superfamily. RNA methyltransferase RsmG family.

The protein localises to the cytoplasm. Specifically methylates the N7 position of a guanine in 16S rRNA. The sequence is that of Ribosomal RNA small subunit methyltransferase G from Thermotoga petrophila (strain ATCC BAA-488 / DSM 13995 / JCM 10881 / RKU-1).